Here is a 578-residue protein sequence, read N- to C-terminus: PX domain-containing protein kinase-like protein (578 aa).

Positions 14-126 (LDDTVPLTAA…KFLDPNNYSA (113 aa)) constitute a PX domain. Positions 88–481 (FIAERQKGLQ…LENSEEHSAK (394 aa)) constitute a Protein kinase domain. Basic residues-rich tracts occupy residues 437 to 448 (IHQHRRLTRAQS) and 457 to 469 (KKRKILARKKSKR). Disordered regions lie at residues 437 to 548 (IHQH…NGMS) and 559 to 578 (FQKGTLRKAKTCDHSAPKIG). Residues 483–513 (SNSNNSAGSGASSPLTSPSSPTPPSTSGISA) are compositionally biased toward low complexity. Residues 514–530 (LPPPPPPPPPPAAPLPP) show a composition bias toward pro residues. In terms of domain architecture, WH2 spans 548–567 (SRGALLSSIQNFQKGTLRKA). Over residues 568–578 (KTCDHSAPKIG) the composition is skewed to basic and acidic residues.

This sequence belongs to the protein kinase superfamily. Widely expressed in all tissues examined except in heart. Isoform 1 is expressed in high levels in the brain, skeletal muscle, spleen and testis. Isoform 7 expression has yet to be demonstrated.

The protein resides in the cytoplasm. It localises to the cell membrane. In terms of biological role, binds to and modulates brain Na,K-ATPase subunits ATP1B1 and ATP1B3 and may thereby participate in the regulation of electrical excitability and synaptic transmission. May not display kinase activity. This Homo sapiens (Human) protein is PX domain-containing protein kinase-like protein.